Reading from the N-terminus, the 122-residue chain is Biogenesis of lysosome-related organelles complex 1 subunit BLS1 (122 aa).

The residue at position 33 (S33) is a Phosphoserine.

The protein belongs to the BLOC1S1 family. As to quaternary structure, component of the biogenesis of lysosome-related organelles complex-1 (BLOC-1) composed of at least BLI1, BLS1, CNL1, KXD1, SNN1 and VAB2.

It is found in the endosome. Its function is as follows. Component of the biogenesis of lysosome-related organelles complex-1 (BLOC-1), a complex involved in endosomal cargo sorting. In Saccharomyces cerevisiae (strain RM11-1a) (Baker's yeast), this protein is Biogenesis of lysosome-related organelles complex 1 subunit BLS1 (BLS1).